Reading from the N-terminus, the 833-residue chain is Leucine--tRNA ligase (833 aa).

The 'HIGH' region motif lies at 41–52 (PYPSGAGLHVGH). Residues 610-614 (KMSKS) carry the 'KMSKS' region motif. Residue K613 participates in ATP binding.

It belongs to the class-I aminoacyl-tRNA synthetase family.

The protein localises to the cytoplasm. It catalyses the reaction tRNA(Leu) + L-leucine + ATP = L-leucyl-tRNA(Leu) + AMP + diphosphate. This Streptococcus agalactiae serotype Ia (strain ATCC 27591 / A909 / CDC SS700) protein is Leucine--tRNA ligase.